A 274-amino-acid polypeptide reads, in one-letter code: MARRPDNQNPEGENLRIKRVRLESVRQNDEEEENEVSRTQNIVTDNRHDSPEAVVEIIGERALENTSEEDGDDDLSLFRALEEDPGSDHNTSNNDSGNHDRETMHTEEPEASSGNNITLTNNVEELHTMDVLSQTANTPSASPMLDAAPPTTKPGTNSKEQTVDLTADAIDLDAEEQQVLQISDDDFQEETKEAPKEYGAAKDYRCPICFEPPETALMTLCGHVFCCPCLFQMVNSSRTCRQFGHCALCRSKVYLKDVRLIILRKKQVKKKVKS.

Disordered stretches follow at residues 1-117 and 136-159; these read MARR…GNNI and ANTPSASPMLDAAPPTTKPGTNSK. Over residues 13–28 the composition is skewed to basic and acidic residues; sequence ENLRIKRVRLESVRQN. The residue at position 50 (Ser-50) is a Phosphoserine. At Thr-66 the chain carries Phosphothreonine. The segment covering 66–75 has biased composition (acidic residues); the sequence is TSEEDGDDDL. A Phosphoserine modification is found at Ser-67. Over residues 97 to 108 the composition is skewed to basic and acidic residues; it reads GNHDRETMHTEE. Residues 206–250 form an RING-type zinc finger; it reads CPICFEPPETALMTLCGHVFCCPCLFQMVNSSRTCRQFGHCALCR.

In terms of assembly, component of the heterodimeric SUMO-targeted ubiquitin ligase (STUbL) complex composed of SLX5 and SLX8.

Its subcellular location is the nucleus. It is found in the chromosome. It localises to the centromere. The protein resides in the kinetochore. The enzyme catalyses S-ubiquitinyl-[E2 ubiquitin-conjugating enzyme]-L-cysteine + [acceptor protein]-L-lysine = [E2 ubiquitin-conjugating enzyme]-L-cysteine + N(6)-ubiquitinyl-[acceptor protein]-L-lysine.. The protein operates within protein modification; protein ubiquitination. Component of the SUMO-targeted ubiquitin ligase (STUbL) complex SLX5/SLX8 that mediates ubiquitination and subsequent desumoylation of sumoylated proteins and proteins containing SUMO-like domains for their degradation. The STUbL complex SLX5/SLX8 stimulates ubiquitin conjugating enzymes, including UBC1, UBC4, UBC5 and UBC13-MMS2, and mediates the proteolytic down-regulation of sumoylated proteins. The STUbL complex SLX5/SLX8 is involved in ubiquitin-mediated degradation of histone variant CSE4, preventing mislocalization to euchromatin. The complex plays an essential role in maintenance of chromosome stability and links SUMO-dependent ubiquitination to a centromere-specific function during mitosis. The complex is involved in proteolysis of spindle positioning protein KAR9 and ensures correct spindle function by regulating levels of microtubule-associated proteins. During replication, the complex helps to prevent DNA lesions via recombination and has a role in localizing the DNA damage protein DCD2. The complex especially ubiquitinates the nuclease YEN1 and prevents persistent accumulation of a fraction of YEN1 associated with sites of activity in late G2/M and helps maintain the balance between pro- and anti-crossover pathways during homologous recombination. It is also involved in ubiquitin-mediated degradation of DNA repair proteins RAD52 and RAD57. Finally, the complex is recruited to distinct genomic hotspots of non-H2B protein ubiquitination (ub-hotspots) by the sumoylated transcription factor-like protein EUC1 where it ubiquitinates EUC1 and presumably other targets. This is E3 ubiquitin-protein ligase complex SLX5-SLX8 subunit SLX8 (SLX8) from Saccharomyces cerevisiae (strain ATCC 204508 / S288c) (Baker's yeast).